A 389-amino-acid chain; its full sequence is Chalcone synthase 1 (389 aa).

The active site involves Cys-164.

This sequence belongs to the thiolase-like superfamily. Chalcone/stilbene synthases family.

It catalyses the reaction (E)-4-coumaroyl-CoA + 3 malonyl-CoA + 3 H(+) = 2',4,4',6'-tetrahydroxychalcone + 3 CO2 + 4 CoA. The protein operates within secondary metabolite biosynthesis; flavonoid biosynthesis. Its function is as follows. The primary product of this enzyme is 4,2',4',6'-tetrahydroxychalcone (also termed naringenin-chalcone or chalcone) which can under specific conditions spontaneously isomerize into naringenin. The protein is Chalcone synthase 1 (CHS1) of Solanum lycopersicum (Tomato).